Here is a 238-residue protein sequence, read N- to C-terminus: tRNA (guanine-N(7)-)-methyltransferase (238 aa).

S-adenosyl-L-methionine contacts are provided by glutamate 71, glutamate 96, aspartate 123, and aspartate 146. Aspartate 146 is a catalytic residue. Substrate contacts are provided by residues lysine 150, aspartate 182, and 217–220 (TKFE).

This sequence belongs to the class I-like SAM-binding methyltransferase superfamily. TrmB family.

It catalyses the reaction guanosine(46) in tRNA + S-adenosyl-L-methionine = N(7)-methylguanosine(46) in tRNA + S-adenosyl-L-homocysteine. Its pathway is tRNA modification; N(7)-methylguanine-tRNA biosynthesis. Its function is as follows. Catalyzes the formation of N(7)-methylguanine at position 46 (m7G46) in tRNA. The protein is tRNA (guanine-N(7)-)-methyltransferase of Methylobacillus flagellatus (strain ATCC 51484 / DSM 6875 / VKM B-1610 / KT).